The chain runs to 277 residues: Pantothenate synthetase (277 aa).

28 to 35 (MGALHSGH) is a binding site for ATP. His35 functions as the Proton donor in the catalytic mechanism. Gln59 provides a ligand contact to (R)-pantoate. Beta-alanine is bound at residue Gln59. ATP-binding positions include 145 to 148 (GEKD), Val174, and 182 to 185 (LSSR).

Belongs to the pantothenate synthetase family. In terms of assembly, homodimer.

It is found in the cytoplasm. The enzyme catalyses (R)-pantoate + beta-alanine + ATP = (R)-pantothenate + AMP + diphosphate + H(+). It participates in cofactor biosynthesis; (R)-pantothenate biosynthesis; (R)-pantothenate from (R)-pantoate and beta-alanine: step 1/1. Functionally, catalyzes the condensation of pantoate with beta-alanine in an ATP-dependent reaction via a pantoyl-adenylate intermediate. This chain is Pantothenate synthetase, found in Anaplasma marginale (strain St. Maries).